A 494-amino-acid polypeptide reads, in one-letter code: Sulfate adenylyltransferase subunit 1 (494 aa).

The tr-type G domain maps to 24–240; the sequence is TRPLRLITCG…LELATVRSAQ (217 aa). A G1 region spans residues 33–40; the sequence is GSVDDGKS. 33–40 serves as a coordination point for GTP; that stretch reads GSVDDGKS. The segment at 91-95 is G2; that stretch reads GITID. Residues 112 to 115 form a G3 region; the sequence is DTPG. Residues 112 to 116 and 167 to 170 contribute to the GTP site; these read DTPGH and NKID. A G4 region spans residues 167–170; it reads NKID. The interval 204-206 is G5; sequence SAL.

The protein belongs to the TRAFAC class translation factor GTPase superfamily. Classic translation factor GTPase family. CysN/NodQ subfamily. Heterodimer composed of CysD, the smaller subunit, and CysN.

The catalysed reaction is sulfate + ATP + H(+) = adenosine 5'-phosphosulfate + diphosphate. It participates in sulfur metabolism; hydrogen sulfide biosynthesis; sulfite from sulfate: step 1/3. With CysD forms the ATP sulfurylase (ATPS) that catalyzes the adenylation of sulfate producing adenosine 5'-phosphosulfate (APS) and diphosphate, the first enzymatic step in sulfur assimilation pathway. APS synthesis involves the formation of a high-energy phosphoric-sulfuric acid anhydride bond driven by GTP hydrolysis by CysN coupled to ATP hydrolysis by CysD. In Rhizobium tropici, this protein is Sulfate adenylyltransferase subunit 1.